A 232-amino-acid polypeptide reads, in one-letter code: Biosynthetic peptidoglycan transglycosylase (232 aa).

A helical membrane pass occupies residues 12–31 (YLLWFMAASVVLVAVLRWVP).

The protein belongs to the glycosyltransferase 51 family.

The protein localises to the cell inner membrane. It carries out the reaction [GlcNAc-(1-&gt;4)-Mur2Ac(oyl-L-Ala-gamma-D-Glu-L-Lys-D-Ala-D-Ala)](n)-di-trans,octa-cis-undecaprenyl diphosphate + beta-D-GlcNAc-(1-&gt;4)-Mur2Ac(oyl-L-Ala-gamma-D-Glu-L-Lys-D-Ala-D-Ala)-di-trans,octa-cis-undecaprenyl diphosphate = [GlcNAc-(1-&gt;4)-Mur2Ac(oyl-L-Ala-gamma-D-Glu-L-Lys-D-Ala-D-Ala)](n+1)-di-trans,octa-cis-undecaprenyl diphosphate + di-trans,octa-cis-undecaprenyl diphosphate + H(+). Its pathway is cell wall biogenesis; peptidoglycan biosynthesis. Peptidoglycan polymerase that catalyzes glycan chain elongation from lipid-linked precursors. In Pseudomonas aeruginosa (strain ATCC 15692 / DSM 22644 / CIP 104116 / JCM 14847 / LMG 12228 / 1C / PRS 101 / PAO1), this protein is Biosynthetic peptidoglycan transglycosylase.